Consider the following 2406-residue polypeptide: Highly reducing polyketide synthase dmxL2 (2406 aa).

Positions 1-399 (MEAFWSASKK…GTNAHAVLDD (399 aa)) constitute a Ketosynthase family 3 (KS3) domain. Cys130 is an active-site residue. Residue Cys130 is the For beta-ketoacyl synthase activity of the active site. The disordered stretch occupies residues 414 to 476 (GHASNGTNGT…GPTDGPTSRP (63 aa)). A compositionally biased stretch (polar residues) spans 417-448 (SNGTNGTLTNGHILNGEHTSNGMNGTLTNGHA). Residues 574–911 (FVFTGQGAQW…LAGSLFTQGY (338 aa)) form a malonyl-CoA:ACP transacylase (MAT) domain region. Ser665 (for malonyltransferase activity) is an active-site residue. The N-terminal hotdog fold stretch occupies residues 962–1096 (PSLLGSPSPS…GLLVIEYEAA (135 aa)). One can recognise a PKS/mFAS DH domain in the interval 962–1278 (PSLLGSPSPS…CAEIAGASSN (317 aa)). Residues 964-1273 (LLGSPSPSLA…IEGFLCAEIA (310 aa)) are dehydratase (DH) domain. His994 acts as the Proton acceptor; for dehydratase activity in catalysis. Residues 1124-1278 (VHRLDPSGFY…CAEIAGASSN (155 aa)) form a C-terminal hotdog fold region. Catalysis depends on Asp1189, which acts as the Proton donor; for dehydratase activity. An enoylreductase (ER) domain region spans residues 1694–2006 (GMLGSVCLEP…TGKHLGKIAL (313 aa)). The interval 2032 to 2210 (GVYLLVGGLG…TTVDLGIMRD (179 aa)) is ketoreductase (KR) domain. The Carrier domain occupies 2318 to 2395 (EASDSVLEAL…TFCNRIAAKS (78 aa)). An O-(pantetheine 4'-phosphoryl)serine modification is found at Ser2355.

Its pathway is secondary metabolite biosynthesis. Functionally, highly reducing polyketide synthase; part of the gene cluster that mediates the biosynthesis of the dimeric xanthones cryptosporioptides. The pathway begins with the synthesis of atrochrysone thioester by the polyketide synthase dmx-nrPKS. The atrochrysone carboxyl ACP thioesterase dmxR1 then breaks the thioester bond and releases the atrochrysone carboxylic acid from dmx-nrPKS. Atrochrysone carboxylic acid is decarboxylated by the decarboxylase dmxR15, and oxidized by the anthrone oxygenase dmxR16 to yield emodin. Emodin is then reduced to emodin hydroquinone by the oxidoreductase dmxR7. A-ring reduction by the short chain dehydrogenase dmxR18, dehydration by the scytalone dehydratase-like protein dmxR17 and probable spontaneous re-oxidation, results in overall deoxygenation to chrysophanol. Baeyer-Villiger oxidation by the Baeyer-Villiger monooxygenase (BVMO) dmxR6 then yields monodictylactone in equilibrium with monodictyphenone. In the case of the cryptosporioptides biosynthesis, monodictylactone is reduced at C-12 to an alcohol (by the short chain dehydrogenases dmxR12 or dmxR8) and hydroxylated at C-5 by dmxR9, yielding the electron-rich aromatic which could eliminate H(2)O to form the ortho-quinonemethide, followed by tautomerisation to paraquinone and complete the formal reduction to produce the 10-methylgroup. Conjugate addition of C-4a-OH to the resulting paraquinone by the monooxygenase dmxR10 then gives cyclohexadienone, which is then reduced at C-5 by the short chain dehydrogenase dmxR3 to give the dihydroxanthone. The 6,7-epoxide in the cryptosporioptides could be introduced by the cytochrome P450 monooxygenase dmxL3. The highly reducing PKS dmxL2 manufactures butyrate, which is further carboxylated by dmxL1 to form ethylmalonate. It is not yet clear whether the carboxylation occurs while the butyrate is attached to the ACP of dmxL2, but this unusual fungal metabolite could then be esterified to O-5 by the O-acetyltransferase dmxR13. Finally, dimerization performed by dmxR5 gives the observed dimers cryptosporioptides A, B and C as the final products of the pathway. This is Highly reducing polyketide synthase dmxL2 from Cryptosporiopsis sp. (strain 8999).